We begin with the raw amino-acid sequence, 228 residues long: Cytidylate kinase (228 aa).

11 to 19 (GPAGTGKSS) serves as a coordination point for ATP.

It belongs to the cytidylate kinase family. Type 1 subfamily.

The protein localises to the cytoplasm. The catalysed reaction is CMP + ATP = CDP + ADP. It carries out the reaction dCMP + ATP = dCDP + ADP. This is Cytidylate kinase from Mycolicibacterium paratuberculosis (strain ATCC BAA-968 / K-10) (Mycobacterium paratuberculosis).